The primary structure comprises 217 residues: Outer-membrane lipoprotein LolB (217 aa).

The signal sequence occupies residues 1-20; that stretch reads MSKTVRTLALGGLVLAGLSA. Residue cysteine 21 is the site of N-palmitoyl cysteine attachment. Cysteine 21 carries the S-diacylglycerol cysteine lipid modification. The interval 105-124 is disordered; that stretch reads DTTSGAGRLEGLEGGPRSGP.

This sequence belongs to the LolB family. As to quaternary structure, monomer.

The protein resides in the cell outer membrane. Plays a critical role in the incorporation of lipoproteins in the outer membrane after they are released by the LolA protein. In Xanthomonas axonopodis pv. citri (strain 306), this protein is Outer-membrane lipoprotein LolB.